The following is a 215-amino-acid chain: Sodium channel regulatory subunit beta-2 (215 aa).

The N-terminal stretch at 1–29 is a signal peptide; sequence MHRDAWLPRPAFSLTGLSLFFSLVPPGRS. Topologically, residues 30-157 are extracellular; sequence MEVTVPATLN…MEEPPERDST (128 aa). An Ig-like C2-type domain is found at 32–154; it reads VTVPATLNVL…QVLMEEPPER (123 aa). Asparagine 42, asparagine 66, and asparagine 74 each carry an N-linked (GlcNAc...) asparagine glycan. 2 disulfide bridges follow: cysteine 50-cysteine 127 and cysteine 72-cysteine 75. Residues 158–179 form a helical membrane-spanning segment; that stretch reads VAVIVGASVGGFLAVVILVLMV. Topologically, residues 180 to 215 are cytoplasmic; the sequence is VKCVRRKKEQKLSTDDLKTEEEGKTDGEGNPDDGAK. The disordered stretch occupies residues 187 to 215; sequence KEQKLSTDDLKTEEEGKTDGEGNPDDGAK. Residues 189–215 are compositionally biased toward basic and acidic residues; it reads QKLSTDDLKTEEEGKTDGEGNPDDGAK. Serine 192 is subject to Phosphoserine. Threonine 204 bears the Phosphothreonine mark.

It belongs to the sodium channel auxiliary subunit SCN2B (TC 8.A.17) family. As to quaternary structure, a voltage-gated sodium (Nav) channel consists of an ion-conducting pore-forming alpha subunit functional on its own that is regulated by one or more beta subunits. The beta subunit SCN2B is disulfide-linked to the pore-forming alpha subunit. Interacts with SCN1A; regulatory subunit of SCN1A/Nav1.1. Interacts with SCN2A; regulatory subunit of SCN2A/Nav1.2. Interacts with SCN3A; regulatory subunit of SCN3A/Nav1.3. Interacts with SCN5A; regulatory subunit of SCN5A/Nav1.5. Interacts with SCN8A; regulatory subunit of SCN8A/Nav1.6. Interacts with SCN9A; regulatory subunit of SCN9A/Nav1.7. Interacts with SCN10A; regulatory subunit of SCN10A/Nav1.8. Interacts with TNR; may play a crucial role in clustering and regulation of activity of SCN2B-containing Nav channels at nodes of Ranvier.

Its subcellular location is the cell membrane. It is found in the cell projection. The protein resides in the axon. Regulatory subunit of multiple voltage-gated sodium (Nav) channels directly mediating the depolarization of excitable membranes. Navs, also called VGSCs (voltage-gated sodium channels) or VDSCs (voltage-dependent sodium channels), operate by switching between closed and open conformations depending on the voltage difference across the membrane. In the open conformation they allow Na(+) ions to selectively pass through the pore, along their electrochemical gradient. The influx of Na+ ions provokes membrane depolarization, initiating the propagation of electrical signals throughout cells and tissues. The accessory beta subunits participate in localization and functional modulation of the Nav channels. Modulates the activity of SCN1A/Nav1.1, SCN2A/Nav1.2, SCN2A/Nav1.3, SCN5A/Nav1.5, SCN8A/Nav1.6, SCN9A/Nav1.7 and SCN10A/Nav1.8. In Homo sapiens (Human), this protein is Sodium channel regulatory subunit beta-2.